The sequence spans 83 residues: Mu-theraphotoxin-Hhn2g (83 aa).

The signal sequence occupies residues 1 to 21 (MKASMYLALAGLVLLFVVGYA). Positions 22–48 (SESEEKEFPRELLSKIFAVDDFKGEER) are excised as a propeptide. 2 disulfide bridges follow: Cys50–Cys65 and Cys57–Cys70. Leu81 carries the leucine amide modification.

This sequence belongs to the neurotoxin 10 (Hwtx-1) family. 15 (Hntx-3) subfamily. As to quaternary structure, monomer. In terms of tissue distribution, expressed by the venom gland.

The protein resides in the secreted. Lethal neurotoxin. Selectively blocks tetrodotoxin-sensitive voltage-gated sodium channels (Nav). Does not affect tetrodotoxin-resistant voltage-gated sodium channels or calcium channels. The sequence is that of Mu-theraphotoxin-Hhn2g from Cyriopagopus hainanus (Chinese bird spider).